A 157-amino-acid chain; its full sequence is uncharacterized protein (157 aa).

A helical membrane pass occupies residues 6 to 26; the sequence is LVGGVLRVLVVVGAVFDVAVL. The 125-residue stretch at 33–157 folds into the Ricin B-type lectin domain; sequence ADGPVQLKSR…APDQQWDSVP (125 aa).

Its subcellular location is the membrane. This is an uncharacterized protein from Mycobacterium tuberculosis (strain CDC 1551 / Oshkosh).